The chain runs to 111 residues: Shuttling pre-60S factor C23B6.02c (111 aa).

2 stretches are compositionally biased toward basic residues: residues Met1–Phe12 and Ser59–Lys73. Disordered stretches follow at residues Met1 to Thr25 and Ala47 to Glu111. Residues Gln83 to Glu111 show a composition bias toward basic and acidic residues.

The protein belongs to the ECM1 family. In terms of assembly, associates with the pre-60S ribosomal particle and the nucleopore complex.

Its subcellular location is the nucleus. The protein localises to the nucleolus. It is found in the cytoplasm. In terms of biological role, pre-ribosomal factor involved in 60S ribosomal protein subunit export from the nucleus. The protein is Shuttling pre-60S factor C23B6.02c of Schizosaccharomyces pombe (strain 972 / ATCC 24843) (Fission yeast).